Consider the following 644-residue polypeptide: Chaperone protein DnaK (644 aa).

T199 is modified (phosphothreonine; by autocatalysis). The segment at 602–644 is disordered; it reads IYAKKSSEGQTAQGQTQSQESTKPAEEGVVDAEFEEVKEEDKK. The segment covering 609–623 has biased composition (polar residues); the sequence is EGQTAQGQTQSQEST. Residues 629–644 are compositionally biased toward acidic residues; sequence GVVDAEFEEVKEEDKK.

Belongs to the heat shock protein 70 family.

In terms of biological role, acts as a chaperone. In Legionella pneumophila (strain Lens), this protein is Chaperone protein DnaK.